The following is a 1367-amino-acid chain: DNA-directed RNA polymerase subunit beta' (1367 aa).

Residues 1–34 form a disordered region; it reads MTSTSPKSRKSSSKRKGSKKKAARSKNVIPPLSK. Residues 7–24 show a composition bias toward basic residues; the sequence is KSRKSSSKRKGSKKKAAR. Zn(2+) contacts are provided by Cys250, Cys317, Cys324, and Cys327. The interval 1306–1367 is disordered; it reads SVLDDPSDAD…LQEEGLLSDE (62 aa). Positions 1355 to 1367 are enriched in low complexity; the sequence is LEGLQEEGLLSDE.

It belongs to the RNA polymerase beta' chain family. RpoC2 subfamily. In terms of assembly, in cyanobacteria the RNAP catalytic core is composed of 2 alpha, 1 beta, 1 beta', 1 gamma and 1 omega subunit. When a sigma factor is associated with the core the holoenzyme is formed, which can initiate transcription. The cofactor is Zn(2+).

The catalysed reaction is RNA(n) + a ribonucleoside 5'-triphosphate = RNA(n+1) + diphosphate. In terms of biological role, DNA-dependent RNA polymerase catalyzes the transcription of DNA into RNA using the four ribonucleoside triphosphates as substrates. In Prochlorococcus marinus (strain SARG / CCMP1375 / SS120), this protein is DNA-directed RNA polymerase subunit beta'.